A 353-amino-acid polypeptide reads, in one-letter code: Inactive ubiquitin thioesterase OTULINL (353 aa).

Residues 1–80 (MKATRSAPRE…KWWIGYLQRK (80 aa)) form a required for membrane binding region. Residues 125–353 (KCVRPVKRDN…NDHQYHIPVF (229 aa)) form the OTU domain.

The protein belongs to the peptidase C65 family. Otulin subfamily. As to quaternary structure, does not bind ubiquitin or ubiquitin-like proteins.

Its subcellular location is the cytoplasm. It localises to the endoplasmic reticulum membrane. It is found in the nucleus envelope. Its function is as follows. Lacks deubiquitinase activity. The sequence is that of Inactive ubiquitin thioesterase OTULINL from Rattus norvegicus (Rat).